Reading from the N-terminus, the 345-residue chain is V-type proton ATPase subunit d (345 aa).

At methionine 1 the chain carries N-acetylmethionine.

The protein belongs to the V-ATPase V0D/AC39 subunit family. As to quaternary structure, V-ATPase is a heteromultimeric enzyme composed of a peripheral catalytic V1 complex (components A to H) attached to an integral membrane V0 proton pore complex (components: a, c, c', c'', d, e, f and VOA1).

The protein localises to the vacuole membrane. Its function is as follows. Subunit of the V0 complex of vacuolar(H+)-ATPase (V-ATPase), a multisubunit enzyme composed of a peripheral complex (V1) that hydrolyzes ATP and a membrane integral complex (V0) that translocates protons. V-ATPase is responsible for acidifying and maintaining the pH of intracellular compartments. This subunit is a non-integral membrane component of the membrane pore domain and is required for proper assembly of the V0 sector. Might be involved in the regulated assembly of V1 subunits onto the membrane sector or alternatively may prevent the passage of protons through V0 pores. This Saccharomyces cerevisiae (strain ATCC 204508 / S288c) (Baker's yeast) protein is V-type proton ATPase subunit d.